The following is an 87-amino-acid chain: Large ribosomal subunit protein bL31B (87 aa).

The protein belongs to the bacterial ribosomal protein bL31 family. Type B subfamily. As to quaternary structure, part of the 50S ribosomal subunit.

This is Large ribosomal subunit protein bL31B from Halorhodospira halophila (strain DSM 244 / SL1) (Ectothiorhodospira halophila (strain DSM 244 / SL1)).